We begin with the raw amino-acid sequence, 213 residues long: Probable elongation factor 1-beta/1-delta 1 (213 aa).

The protein belongs to the EF-1-beta/EF-1-delta family. In terms of assembly, EF-1 is composed of 4 subunits: alpha, beta, delta, and gamma.

Its function is as follows. EF-1-beta and EF-1-delta stimulate the exchange of GDP bound to EF-1-alpha to GTP. This is Probable elongation factor 1-beta/1-delta 1 (eef-1B.1) from Caenorhabditis elegans.